Here is a 470-residue protein sequence, read N- to C-terminus: Argininosuccinate lyase (470 aa).

Belongs to the lyase 1 family. Argininosuccinate lyase subfamily.

It is found in the cytoplasm. It carries out the reaction 2-(N(omega)-L-arginino)succinate = fumarate + L-arginine. It functions in the pathway amino-acid biosynthesis; L-arginine biosynthesis; L-arginine from L-ornithine and carbamoyl phosphate: step 3/3. The protein is Argininosuccinate lyase of Leptospira borgpetersenii serovar Hardjo-bovis (strain JB197).